The sequence spans 1214 residues: Formin-D (1214 aa).

In terms of domain architecture, GBD/FH3 spans 10–379; it reads KKEESPQSID…KMNNGESYLD (370 aa). Positions 401 to 448 form a coiled coil; the sequence is SGEKAVLIQKEIEDLKKQKKRDQDKLAEKDKLLTKLAKRMRKMEEAIK. The FH1 domain maps to 457–544; the sequence is NNQIEIESPP…GSGDGIPLPP (88 aa). 2 stretches are compositionally biased toward polar residues: residues 462-479 and 518-534; these read IESPPDSSTSTPQETTPG and LDTTNQQGSTDASQTEA. Disordered stretches follow at residues 462–490, 507–569, 868–948, 1026–1045, 1054–1089, and 1133–1214; these read IESPPDSSTSTPQETTPGGTKVPLKTSPV, APNG…SRPP, PKSV…PLKD, DKSTQRKNEKERKEMEIKKS, LKKIGSPSSSNRILASNESSPTSSTSSVVHQHDDED, and MNLQ…EGEN. Over residues 541–554 the composition is skewed to pro residues; the sequence is PLPPGAPPPPPPPG. In terms of domain architecture, FH2 spans 562-1037; that stretch reads PQLCSRPPSI…STQRKNEKER (476 aa). Over residues 868–877 the composition is skewed to basic and acidic residues; sequence PKSVEPKPDD. Residues 930-940 are compositionally biased toward polar residues; it reads QVNTNSTSDSK. A coiled-coil region spans residues 1019–1056; it reads EIEKSIKDKSTQRKNEKERKEMEIKKSKLEMIHSKLKK. Polar residues predominate over residues 1059–1071; it reads SPSSSNRILASNE. The DAD domain maps to 1065-1095; the sequence is RILASNESSPTSSTSSVVHQHDDEDEETIKE. The segment covering 1161–1171 has biased composition (low complexity); the sequence is SSTYSSISSIY. Positions 1174–1214 are enriched in acidic residues; the sequence is EPLDMSDQEDEDEEEEEDEEEEEEEEEGDDDNDNDEEEGEN. Residues 1176-1207 adopt a coiled-coil conformation; sequence LDMSDQEDEDEEEEEDEEEEEEEEEGDDDNDN.

Belongs to the formin homology family. Diaphanous subfamily. Interacts (via GBD/FH3 domain) with activated Rho-GTPases.

In terms of biological role, formins play an important role in the nucleation of actin and the formation of linear actin filaments. In Dictyostelium discoideum (Social amoeba), this protein is Formin-D (forD).